The following is an 89-amino-acid chain: Small ribosomal subunit protein uS15 (89 aa).

It belongs to the universal ribosomal protein uS15 family. As to quaternary structure, part of the 30S ribosomal subunit. Forms a bridge to the 50S subunit in the 70S ribosome, contacting the 23S rRNA.

One of the primary rRNA binding proteins, it binds directly to 16S rRNA where it helps nucleate assembly of the platform of the 30S subunit by binding and bridging several RNA helices of the 16S rRNA. In terms of biological role, forms an intersubunit bridge (bridge B4) with the 23S rRNA of the 50S subunit in the ribosome. The chain is Small ribosomal subunit protein uS15 from Shewanella woodyi (strain ATCC 51908 / MS32).